A 487-amino-acid chain; its full sequence is 2-succinylbenzoate--CoA ligase (487 aa).

The protein belongs to the ATP-dependent AMP-binding enzyme family. MenE subfamily.

The enzyme catalyses 2-succinylbenzoate + ATP + CoA = 2-succinylbenzoyl-CoA + AMP + diphosphate. Its pathway is quinol/quinone metabolism; 1,4-dihydroxy-2-naphthoate biosynthesis; 1,4-dihydroxy-2-naphthoate from chorismate: step 5/7. It functions in the pathway quinol/quinone metabolism; menaquinone biosynthesis. Converts 2-succinylbenzoate (OSB) to 2-succinylbenzoyl-CoA (OSB-CoA). The sequence is that of 2-succinylbenzoate--CoA ligase from Bacillus velezensis (strain DSM 23117 / BGSC 10A6 / LMG 26770 / FZB42) (Bacillus amyloliquefaciens subsp. plantarum).